A 622-amino-acid chain; its full sequence is Threonine--tRNA ligase (622 aa).

The interval 1 to 141 (MKTLLIHSDY…SRKITTERKE (141 aa)) is editing domain. Positions 199-498 (PHVKYIKEKE…TLENKPPALP (300 aa)) are catalytic. Zn(2+)-binding residues include C291, H343, and H467.

It belongs to the class-II aminoacyl-tRNA synthetase family. Homodimer. Requires Zn(2+) as cofactor.

Its subcellular location is the cytoplasm. The catalysed reaction is tRNA(Thr) + L-threonine + ATP = L-threonyl-tRNA(Thr) + AMP + diphosphate + H(+). Its function is as follows. Catalyzes the attachment of threonine to tRNA(Thr) in a two-step reaction: L-threonine is first activated by ATP to form Thr-AMP and then transferred to the acceptor end of tRNA(Thr). Also edits incorrectly charged L-seryl-tRNA(Thr). The sequence is that of Threonine--tRNA ligase from Methanococcus maripaludis (strain C7 / ATCC BAA-1331).